The primary structure comprises 518 residues: 3-octaprenyl-4-hydroxybenzoate carboxy-lyase (518 aa).

N177 is a binding site for Mn(2+). Residues I180 to R182, R194 to L196, and R199 to G200 each bind prenylated FMN. Position 243 (E243) interacts with Mn(2+). The Proton donor role is filled by D318.

Belongs to the UbiD family. As to quaternary structure, homohexamer. Requires prenylated FMN as cofactor. It depends on Mn(2+) as a cofactor.

The protein localises to the cell membrane. It carries out the reaction a 4-hydroxy-3-(all-trans-polyprenyl)benzoate + H(+) = a 2-(all-trans-polyprenyl)phenol + CO2. It participates in cofactor biosynthesis; ubiquinone biosynthesis. Its function is as follows. Catalyzes the decarboxylation of 3-octaprenyl-4-hydroxy benzoate to 2-octaprenylphenol, an intermediate step in ubiquinone biosynthesis. In Burkholderia multivorans (strain ATCC 17616 / 249), this protein is 3-octaprenyl-4-hydroxybenzoate carboxy-lyase.